A 354-amino-acid chain; its full sequence is Probable butyrate kinase 2 (354 aa).

It belongs to the acetokinase family.

The protein localises to the cytoplasm. It catalyses the reaction butanoate + ATP = butanoyl phosphate + ADP. In Caldanaerobacter subterraneus subsp. tengcongensis (strain DSM 15242 / JCM 11007 / NBRC 100824 / MB4) (Thermoanaerobacter tengcongensis), this protein is Probable butyrate kinase 2.